Consider the following 491-residue polypeptide: GTPase Der (491 aa).

An EngA-type G 1 domain is found at 3–166 (PVIALVGRPN…AALGIFPRDD (164 aa)). Residues 9 to 16 (GRPNVGKS), 56 to 60 (DTGGI), and 118 to 121 (NKVD) contribute to the GTP site. Residues 164 to 191 (RDDEGEEGEGEAEVVAEGEEPKRVPGPS) form a disordered region. Acidic residues predominate over residues 166-181 (DEGEEGEGEAEVVAEG). Over residues 182-191 (EEPKRVPGPS) the composition is skewed to basic and acidic residues. The EngA-type G 2 domain maps to 196–369 (IKIAIIGRPN…SVQAAFQSAV (174 aa)). GTP is bound by residues 202–209 (GRPNVGKS), 249–253 (DTAGV), and 314–317 (NKWD). One can recognise a KH-like domain in the interval 370–454 (TRWPTSRLTR…PIRIEYKGGD (85 aa)). Positions 452–464 (GGDNPYEGKKNSL) are enriched in basic and acidic residues. The disordered stretch occupies residues 452–491 (GGDNPYEGKKNSLTERQVNKKRRLMSHHKKAEKKRRDKKR). The span at 470–491 (NKKRRLMSHHKKAEKKRRDKKR) shows a compositional bias: basic residues.

The protein belongs to the TRAFAC class TrmE-Era-EngA-EngB-Septin-like GTPase superfamily. EngA (Der) GTPase family. As to quaternary structure, associates with the 50S ribosomal subunit.

GTPase that plays an essential role in the late steps of ribosome biogenesis. In Azotobacter vinelandii (strain DJ / ATCC BAA-1303), this protein is GTPase Der.